The following is a 465-amino-acid chain: Gamma-aminobutyric acid receptor subunit rho-2 (465 aa).

The signal sequence occupies residues 1–20 (MPYFSRLILFLFCLVVLVES). The Extracellular portion of the chain corresponds to 21–260 (RKPKKRRWTG…LYINFTLRRH (240 aa)). Position 105 (Arg105) interacts with 4-aminobutanoate. A glycan (N-linked (GlcNAc...) asparagine) is linked at Asn120. Ser169 contacts 4-aminobutanoate. Cys178 and Cys192 form a disulfide bridge. Residue Glu197 coordinates 4-aminobutanoate. Asn254 carries N-linked (GlcNAc...) asparagine glycosylation. The chain crosses the membrane as a helical span at residues 261–281 (IFFFLLQTYFPATLMVMLSWV). Topologically, residues 282–293 (SFWIDRRAVPAR) are cytoplasmic. A helical membrane pass occupies residues 294-314 (VSLGITTVLTMSTIITGVNAS). Topologically, residues 315-325 (MPRVSYIKAVD) are extracellular. A helical membrane pass occupies residues 326 to 346 (IYLWVSFVFVFLSVLEYAAVN). The Cytoplasmic portion of the chain corresponds to 347–444 (YLTTVQERKE…FQNTHAIDKY (98 aa)). A helical transmembrane segment spans residues 445 to 465 (SRLIFPASYIFFNLIYWSVFA).

This sequence belongs to the ligand-gated ion channel (TC 1.A.9) family. Gamma-aminobutyric acid receptor (TC 1.A.9.5) subfamily. GABRR2 sub-subfamily. In terms of assembly, three rho subunits (rho-1/GBRR1, rho-2/GBRR2 and rho-3/GBRR3) coassemble either to form functional homopentamers or heteropentamers. Rho-2 is unable to form a functional homopentamer. Interacts with SQSTM1.

Its subcellular location is the postsynaptic cell membrane. The protein localises to the cell membrane. The enzyme catalyses chloride(in) = chloride(out). Functionally, rho subunit of the pentameric ligand-gated chloride channels responsible for mediating the effects of gamma-aminobutyric acid (GABA), the major inhibitory neurotransmitter in the brain. Rho-containing GABA-gated chloride channels are a subclass of GABA(A) receptors (GABAARs) entirely composed of rho subunits, where GABA molecules bind at the rho intersubunit interfaces. When activated by GABA, rho-GABAARs selectively allow the flow of chloride anions across the cell membrane down their electrochemical gradient. Rho-2 GABAARs may contribute to the regulation of glial development in the cerebellum by controlling extrasynaptic transmission. Rho-2 GABAARs are also involved in neuronal tonic (extrasynaptic) and phasic (synaptic) transmission in the Purkinje neurons of the cerebellum. Rho-2 GABAARs expressed in retina may play a role in retinal neurotransmission. This is Gamma-aminobutyric acid receptor subunit rho-2 (GABRR2) from Bos taurus (Bovine).